A 114-amino-acid polypeptide reads, in one-letter code: Small ribosomal subunit protein bS6 (114 aa).

The protein belongs to the bacterial ribosomal protein bS6 family.

Binds together with bS18 to 16S ribosomal RNA. In Hydrogenovibrio crunogenus (strain DSM 25203 / XCL-2) (Thiomicrospira crunogena), this protein is Small ribosomal subunit protein bS6.